A 101-amino-acid chain; its full sequence is Large ribosomal subunit protein uL24 (101 aa).

This sequence belongs to the universal ribosomal protein uL24 family. Part of the 50S ribosomal subunit.

Its function is as follows. One of two assembly initiator proteins, it binds directly to the 5'-end of the 23S rRNA, where it nucleates assembly of the 50S subunit. One of the proteins that surrounds the polypeptide exit tunnel on the outside of the subunit. This chain is Large ribosomal subunit protein uL24, found in Clostridioides difficile (strain 630) (Peptoclostridium difficile).